The chain runs to 314 residues: N-acyl-aromatic-L-amino acid amidohydrolase (carboxylate-forming) B (314 aa).

2 residues coordinate Zn(2+): His19 and Glu22. Substrate is bound by residues Arg63 and 70–71; that span reads NR. His116 contacts Zn(2+). Residues Glu178 and Tyr289 each contribute to the substrate site.

It belongs to the AspA/AstE family. Aspartoacylase subfamily. As to quaternary structure, homotetramer. Zn(2+) serves as cofactor.

It localises to the apical cell membrane. Its subcellular location is the cytoplasm. The enzyme catalyses an N-acyl-aromatic L-alpha-amino acid + H2O = an aromatic L-alpha-amino acid + a carboxylate. It catalyses the reaction an N-acetyl-L-cysteine-S-conjugate + H2O = an S-substituted L-cysteine + acetate. Functionally, plays an important role in deacetylating mercapturic acids in kidney proximal tubules. This Danio rerio (Zebrafish) protein is N-acyl-aromatic-L-amino acid amidohydrolase (carboxylate-forming) B (acy3.2).